Reading from the N-terminus, the 378-residue chain is Probable dihydroorotase-like protein (378 aa).

This sequence belongs to the metallo-dependent hydrolases superfamily. DHOase family. PyrC' subfamily.

Its function is as follows. Non-functional DHOase. This chain is Probable dihydroorotase-like protein (pyrC'), found in Helicobacter pylori (strain ATCC 700392 / 26695) (Campylobacter pylori).